We begin with the raw amino-acid sequence, 94 residues long: Large ribosomal subunit protein bL25 (94 aa).

Belongs to the bacterial ribosomal protein bL25 family. As to quaternary structure, part of the 50S ribosomal subunit; part of the 5S rRNA/L5/L18/L25 subcomplex. Contacts the 5S rRNA. Binds to the 5S rRNA independently of L5 and L18.

Its function is as follows. This is one of the proteins that binds to the 5S RNA in the ribosome where it forms part of the central protuberance. The sequence is that of Large ribosomal subunit protein bL25 from Pectobacterium carotovorum subsp. carotovorum (strain PC1).